Reading from the N-terminus, the 363-residue chain is Glycerol-3-phosphate dehydrogenase [NAD(+)], cytoplasmic (363 aa).

NAD(+)-binding positions include 11 to 16 (GSGNWG), Phe98, Lys121, and Ala155. Position 121 (Lys121) interacts with substrate. Lys206 (proton acceptor) is an active-site residue. 2 residues coordinate NAD(+): Arg270 and Gln299. Position 270-271 (270-271 (RN)) interacts with substrate.

The protein belongs to the NAD-dependent glycerol-3-phosphate dehydrogenase family. As to quaternary structure, homodimer. In terms of tissue distribution, isoform GPDH-1 is predominant in thorax and isoform GPDH-3 in abdomen.

It localises to the cytoplasm. The catalysed reaction is sn-glycerol 3-phosphate + NAD(+) = dihydroxyacetone phosphate + NADH + H(+). The protein operates within phospholipid metabolism; alpha-glycerophosphate cycle. This is Glycerol-3-phosphate dehydrogenase [NAD(+)], cytoplasmic from Drosophila melanogaster (Fruit fly).